A 101-amino-acid chain; its full sequence is Small ribosomal subunit protein uS14 (101 aa).

The tract at residues Pro52–Gly72 is disordered. Positions Arg59–Gly72 are enriched in basic residues.

This sequence belongs to the universal ribosomal protein uS14 family. As to quaternary structure, part of the 30S ribosomal subunit. Contacts proteins S3 and S10.

In terms of biological role, binds 16S rRNA, required for the assembly of 30S particles and may also be responsible for determining the conformation of the 16S rRNA at the A site. This chain is Small ribosomal subunit protein uS14, found in Nitrosococcus oceani (strain ATCC 19707 / BCRC 17464 / JCM 30415 / NCIMB 11848 / C-107).